A 263-amino-acid polypeptide reads, in one-letter code: uncharacterized protein (263 aa).

This is an uncharacterized protein from Bacillus subtilis (strain 168).